The primary structure comprises 133 residues: Small ribosomal subunit protein eS8 (133 aa).

The interval 1 to 22 (MGFYQGPDNRKITGGLKGKHRD) is disordered.

This sequence belongs to the eukaryotic ribosomal protein eS8 family. As to quaternary structure, part of the 30S ribosomal subunit.

The sequence is that of Small ribosomal subunit protein eS8 from Saccharolobus islandicus (strain Y.N.15.51 / Yellowstone #2) (Sulfolobus islandicus).